The chain runs to 242 residues: Probable 2-phosphosulfolactate phosphatase (242 aa).

This sequence belongs to the ComB family. Requires Mg(2+) as cofactor.

It carries out the reaction (2R)-O-phospho-3-sulfolactate + H2O = (2R)-3-sulfolactate + phosphate. This is Probable 2-phosphosulfolactate phosphatase from Prochlorococcus marinus (strain NATL1A).